The chain runs to 398 residues: Tryptophan synthase beta chain (398 aa).

Lysine 88 is modified (N6-(pyridoxal phosphate)lysine).

Belongs to the TrpB family. As to quaternary structure, tetramer of two alpha and two beta chains. Pyridoxal 5'-phosphate is required as a cofactor.

The catalysed reaction is (1S,2R)-1-C-(indol-3-yl)glycerol 3-phosphate + L-serine = D-glyceraldehyde 3-phosphate + L-tryptophan + H2O. It participates in amino-acid biosynthesis; L-tryptophan biosynthesis; L-tryptophan from chorismate: step 5/5. The beta subunit is responsible for the synthesis of L-tryptophan from indole and L-serine. In Mannheimia succiniciproducens (strain KCTC 0769BP / MBEL55E), this protein is Tryptophan synthase beta chain.